The primary structure comprises 371 residues: Gustatory and pheromone receptor 39a, isoform A (371 aa).

Over M1–Y41 the chain is Cytoplasmic. The chain crosses the membrane as a helical span at residues A42–L62. Residues H63–E80 lie on the Extracellular side of the membrane. Residue N73 is glycosylated (N-linked (GlcNAc...) asparagine). The helical transmembrane segment at A81–W101 threads the bilayer. Topologically, residues R102 to Q127 are cytoplasmic. A helical membrane pass occupies residues F128–H148. The Extracellular segment spans residues G149–A161. The helical transmembrane segment at L162–V182 threads the bilayer. At S183–L228 the chain is on the cytoplasmic side. The helical transmembrane segment at L229–I249 threads the bilayer. Residues S250–L263 lie on the Extracellular side of the membrane. A helical transmembrane segment spans residues I264–L284. Residues R285 to T340 are Cytoplasmic-facing. The chain crosses the membrane as a helical span at residues L341–M361. Topologically, residues E362–F371 are extracellular. An N-linked (GlcNAc...) asparagine glycan is attached at N363.

Belongs to the insect chemoreceptor superfamily. Gustatory receptor (GR) family. Gr21a subfamily. As to expression, expressed in the adult labellar chemosensory neurons, and adult thorax and wing. In larvae, is expressed in neurons of the posterior pharyngeal sense organ.

The protein resides in the cell membrane. Gustatory receptor which mediates acceptance or avoidance behavior, depending on its substrates. Plays a role in sustaining courtship behavior in males, possibly through the reception of a stimulating arrestant pheromone. The protein is Gustatory and pheromone receptor 39a, isoform A (Gr39a) of Drosophila melanogaster (Fruit fly).